The sequence spans 91 residues: Sm-like protein LSM36B (91 aa).

The Sm domain occupies 14–86; sequence TPADFLKSIR…VLYISTTKGT (73 aa).

The protein belongs to the snRNP Sm proteins family. Component of the heptameric LSM1-LSM7 complex that forms a seven-membered ring structure with a donut shape. The LSM subunits are arranged in the order LSM1, LSM2, LSM3, LSM6, LSM5, LSM7 and LSM4. Component of the heptameric LSM2-LSM8 complex that forms a seven-membered ring structure with a donut shape. The LSM subunits are arranged in the order LSM8, LSM2, LSM3, LSM6, LSM5, LSM7 and LSM4. LSM6B subunit interacts only with its two neighboring subunits, LSM3A or LSM3B and LSM5. Expressed in roots, leaves, stems, flowers and siliques.

It localises to the cytoplasm. The protein localises to the nucleus. Functionally, component of LSM protein complexes, which are involved in RNA processing. Component of the cytoplasmic LSM1-LSM7 complex which is involved in mRNA degradation by promoting decapping and leading to accurate 5'-3' mRNA decay. The cytoplasmic LSM1-LSM7 complex regulates developmental gene expression by the decapping of specific development-related transcripts. Component of the nuclear LSM2-LSM8 complex which is involved splicing nuclear mRNAs. LSM2-LSM8 binds directly to the U6 small nuclear RNAs (snRNAs) and is essential for accurate splicing of selected development-related mRNAs through the stabilization of the spliceosomal U6 snRNA. Plays a critical role in the regulation of development-related gene expression. This is Sm-like protein LSM36B from Arabidopsis thaliana (Mouse-ear cress).